The following is a 220-amino-acid chain: Adenylate kinase (220 aa).

10–15 (GAGKGT) is an ATP binding site. The segment at 30–59 (STGDMLRAAVKNCTPLGLKAKEIMDAGGLV) is NMP. AMP is bound by residues Thr-31, Arg-36, 57–59 (GLV), 85–88 (GFPR), and Gln-92. Residues 126–163 (GRRTCPSCGKGFHVLFAPPRKAGVCDFCGADLVQRGDD) are LID. Arg-127 is a binding site for ATP. Residues Cys-130, Cys-133, Cys-150, and Cys-153 each contribute to the Zn(2+) site. Residues Arg-160 and Arg-171 each contribute to the AMP site. Leu-199 contributes to the ATP binding site.

The protein belongs to the adenylate kinase family. As to quaternary structure, monomer.

The protein localises to the cytoplasm. The catalysed reaction is AMP + ATP = 2 ADP. The protein operates within purine metabolism; AMP biosynthesis via salvage pathway; AMP from ADP: step 1/1. Its function is as follows. Catalyzes the reversible transfer of the terminal phosphate group between ATP and AMP. Plays an important role in cellular energy homeostasis and in adenine nucleotide metabolism. This Pelobacter propionicus (strain DSM 2379 / NBRC 103807 / OttBd1) protein is Adenylate kinase.